Consider the following 239-residue polypeptide: Ribosomal RNA small subunit methyltransferase G (239 aa).

S-adenosyl-L-methionine-binding positions include G79, F84, 130-131, and R149; that span reads AE.

This sequence belongs to the methyltransferase superfamily. RNA methyltransferase RsmG family.

The protein localises to the cytoplasm. In terms of biological role, specifically methylates the N7 position of a guanine in 16S rRNA. This is Ribosomal RNA small subunit methyltransferase G from Lactobacillus delbrueckii subsp. bulgaricus (strain ATCC 11842 / DSM 20081 / BCRC 10696 / JCM 1002 / NBRC 13953 / NCIMB 11778 / NCTC 12712 / WDCM 00102 / Lb 14).